A 501-amino-acid polypeptide reads, in one-letter code: MNAHSPAAKTAIVIGAGFGGLALAIRLQSAGIATTLVEARDKPGGRAYVWHDQGHLFDAGPTVITDPDALKELWALTGQDMARDVTLMPVSPFYRLMWPGGKVFDYVNEADQLERQIAQFNPDDLEGYRRFRDYAEEVYQEGYVKLGTVPFLKLGQMLKAAPALMKLEAYKSVHAKVATFIKDPYLRQAFSYHTLLVGGNPFSTSSIYALIHALERRGGVWFAKGGTNQLVAGMVALFERLGGQMLLNAKVARIDTDGPRATGVTLADGRALTADMVASNGDVMHNYRDLLGHTARGQSRAKSLNAKRWSMSLFVLHFGLREAPKDVAHHTILFGPRYKELVNEIFKGPKLAEDFSLYLHSPCTTDPEMAPPGMSTHYVLAPVPHLGRADIDWAVEGPRYADRILASLEERLIPNLRANLTTTRIFTPSDFASELNAHHGSAFSVEPILTQSAWFRPHNRDKTIRNFYLVGAGTHPGAGIPGVVGSAKATAQVMLSDLASA.

Residue 12–45 (IVIGAGFGGLALAIRLQSAGIATTLVEARDKPGG) participates in FAD binding.

This sequence belongs to the carotenoid/retinoid oxidoreductase family. The cofactor is FAD.

The catalysed reaction is 15-cis-phytoene + 4 A = all-trans-lycopene + 4 AH2. It participates in carotenoid biosynthesis; astaxanthin biosynthesis. Its function is as follows. This enzyme converts phytoene into lycopene via the intermediaries of phytofluene, zeta-carotene and neurosporene by the introduction of four double bonds. This Paracoccus sp. (strain N81106 / MBIC 01143) (Agrobacterium aurantiacum) protein is Phytoene desaturase (lycopene-forming) (crtI).